A 204-amino-acid chain; its full sequence is Cytochrome c biogenesis ATP-binding export protein CcmA (204 aa).

The ABC transporter domain maps to 2-204 (IEVRDLGVSR…LDAEDLGGFL (203 aa)). 34–41 (GPNGIGKT) is a binding site for ATP.

Belongs to the ABC transporter superfamily. CcmA exporter (TC 3.A.1.107) family. As to quaternary structure, the complex is composed of two ATP-binding proteins (CcmA) and two transmembrane proteins (CcmB).

The protein localises to the cell inner membrane. It carries out the reaction heme b(in) + ATP + H2O = heme b(out) + ADP + phosphate + H(+). Functionally, part of the ABC transporter complex CcmAB involved in the biogenesis of c-type cytochromes; once thought to export heme, this seems not to be the case, but its exact role is uncertain. Responsible for energy coupling to the transport system. The sequence is that of Cytochrome c biogenesis ATP-binding export protein CcmA from Ruegeria sp. (strain TM1040) (Silicibacter sp.).